A 402-amino-acid chain; its full sequence is Zinc finger CCHC domain-containing protein 12 (402 aa).

The segment covering 268–277 has biased composition (acidic residues); sequence DTPDDSDEDV. Residues 268–342 are disordered; sequence DTPDDSDEDV…PGNMRRTRKR (75 aa). A compositionally biased stretch (polar residues) spans 311-323; it reads SPNNSQFPSPCTS. The segment at 346-363 adopts a CCHC-type zinc-finger fold; that stretch reads IRCSYCGEEGHSKETCDN. Residues 383 to 392 show a composition bias toward basic and acidic residues; that stretch reads HTEERSREAP. The segment at 383-402 is disordered; it reads HTEERSREAPVEPSDPCELQ.

This sequence belongs to the ZCCHC12 family. In terms of assembly, interacts with SMAD1 and CREB-binding protein (CBP). Forms a protein-DNA complex through its association with SMAD1.

Transcriptional coactivator in the bone morphogenetic protein (BMP)-signaling pathway. It positively modulates BMP signaling by interacting with SMAD1 and associating with CBP in the transcription complex. It contributes to the BMP-induced enhancement of cholinergic-neuron-specific gene expression. The chain is Zinc finger CCHC domain-containing protein 12 (ZCCHC12) from Bos taurus (Bovine).